Here is a 160-residue protein sequence, read N- to C-terminus: Cytochrome b6-f complex subunit 4 (160 aa).

Transmembrane regions (helical) follow at residues 36-56, 95-115, and 127-147; these read LLYT…GLAV, LLGI…PFIE, and PIAM…GVAA.

This sequence belongs to the cytochrome b family. PetD subfamily. As to quaternary structure, the 4 large subunits of the cytochrome b6-f complex are cytochrome b6, subunit IV (17 kDa polypeptide, PetD), cytochrome f and the Rieske protein, while the 4 small subunits are PetG, PetL, PetM and PetN. The complex functions as a dimer.

The protein localises to the cellular thylakoid membrane. Its function is as follows. Component of the cytochrome b6-f complex, which mediates electron transfer between photosystem II (PSII) and photosystem I (PSI), cyclic electron flow around PSI, and state transitions. The polypeptide is Cytochrome b6-f complex subunit 4 (Prochlorothrix hollandica).